Here is a 199-residue protein sequence, read N- to C-terminus: Recombination protein RecR (199 aa).

A C4-type zinc finger spans residues 57 to 72 (CSVCGNITEQDPCAIC). Residues 80–176 (STIMVVEEAK…KVTRLAAGLA (97 aa)) form the Toprim domain.

This sequence belongs to the RecR family.

Functionally, may play a role in DNA repair. It seems to be involved in an RecBC-independent recombinational process of DNA repair. It may act with RecF and RecO. This Lactobacillus delbrueckii subsp. bulgaricus (strain ATCC BAA-365 / Lb-18) protein is Recombination protein RecR.